We begin with the raw amino-acid sequence, 887 residues long: MGIVAETSQNGDTSLCSEKKFTVPQPPSIEEFGIVKPISRGAFGKVYLARRKNNSKLFAVKVVKKADMINKNMVQQVQAERDALALSKSPFIVHLYYSLQSANNIYLVMEYLIGGDVKSLLHIYGYFDEEMAVKYISEVAMALDYLHRHGIIHRDLKPDNMLISNKGHIKLTDFGLSKVTLKRELCMMDILTTPSMAKPKRDYSRTPGQVLSLISSLGFNTPAGGRTQGSLNQQTEGMRGNASTPLLMKKRESLVKGNKLMISCPEASLSSPSIPVKCLTPNLLKCRTQFATSSTSSQSRICLSSLESECGSPRWENCSQDAEAPPYFNSSRVKDSSSEQARSKKPTGSSASQNLKRLEFAFSPIVDRRTGKKAGFQDETGELSDTPLATLNAKGVIRKCLYENKAQEKPKDFDKTGQGELGKFTSSPDSPPWLANGSVAPIQFNDEEKTEKMGVKRNYDLVEKSPEQELLQDKKTNTDYKRGCAITDYPVSQSTGLTMEINSLFLSELRNSANKYASDRKSEDKYISAPRTLEKLDSGNPVAKNLLCELDDNCERDGEVSSTSEGEDRKERLNQDSSSTGMSVTENQIDRDLSHVDKSIKELSFEESQSENSEEITPDNKGIPFMAENDERVQSKYEPNTSILPDSLQNVLASPAPASAMTNPRRKPMVAFRSYNSPINVSNVSEPSKISMNSADKIHFSLECTGSFPMAVTPAQNKVQGLIETPYRTPKSVRRGGIQVDHERILGTPDYLAPELLLRKSHGPAVDWWALGVCLFEFLTGIPPFNDETPSQVFQNILNRDIPWPEEEEEVLSVNAQSAIEILLTIDPTKRAGLKDLKAHPLFHGMEWEELQYQPMSFIPQPDDETDTTYFEARNNAQHLKVSGFSL.

The Protein kinase domain occupies 32-843; sequence FGIVKPISRG…LKDLKAHPLF (812 aa). Residues 38–46 and K61 contribute to the ATP site; that span reads ISRGAFGKV. D155 functions as the Proton acceptor in the catalytic mechanism. Phosphothreonine; by CDK1; in vitro occurs at positions 221 and 244. Positions 321 to 353 are disordered; sequence DAEAPPYFNSSRVKDSSSEQARSKKPTGSSASQ. At S363 the chain carries Phosphoserine; by CDK1; in vitro. Positions 410-435 are disordered; the sequence is PKDFDKTGQGELGKFTSSPDSPPWLA. S465 is subject to Phosphoserine; by CDK1; in vitro. The interval 556 to 624 is disordered; sequence RDGEVSSTSE…EITPDNKGIP (69 aa). Positions 575 to 587 are enriched in polar residues; the sequence is QDSSSTGMSVTEN. Over residues 588-604 the composition is skewed to basic and acidic residues; that stretch reads QIDRDLSHVDKSIKELS. Positions 608–617 are enriched in acidic residues; sequence SQSENSEEIT. S654 and S677 each carry phosphoserine; by CDK1; in vitro. Residue T748 is modified to Phosphothreonine; by CDK1. Residues 844 to 887 form the AGC-kinase C-terminal domain; that stretch reads HGMEWEELQYQPMSFIPQPDDETDTTYFEARNNAQHLKVSGFSL.

This sequence belongs to the protein kinase superfamily. AGC Ser/Thr protein kinase family. Interacts with arpp19 and ensa, leading to their phosphorylation. Post-translationally, phosphorylation at Thr-748 by CDK1 during M phase activates its kinase activity. Not active during other phases of the cell cycle. Has the ability to autophosphorylate.

It localises to the cytoplasm. Its subcellular location is the cytoskeleton. The protein resides in the microtubule organizing center. The protein localises to the centrosome. It is found in the nucleus. The catalysed reaction is L-seryl-[protein] + ATP = O-phospho-L-seryl-[protein] + ADP + H(+). The enzyme catalyses L-threonyl-[protein] + ATP = O-phospho-L-threonyl-[protein] + ADP + H(+). Serine/threonine kinase that plays a key role in M phase by acting as a regulator of mitosis entry and maintenance. Acts by promoting the inactivation of protein phosphatase 2A (PP2A) during M phase: does not directly inhibit PP2A but acts by mediating phosphorylation and subsequent activation of arpp19 and ensa at 'Ser-67', 2 phosphatase inhibitors that specifically inhibit the ppp2r2d (PR55-delta) subunit of PP2A. Inactivation of PP2A during M phase is essential to keep cyclin-B1-CDK1 activity high. Following DNA damage, it is also involved in checkpoint recovery by being inhibited. This Xenopus laevis (African clawed frog) protein is Serine/threonine-protein kinase greatwall (mastl).